Reading from the N-terminus, the 681-residue chain is U3 small nucleolar ribonucleoprotein protein MPP10 (681 aa).

Residues serine 61, serine 120, and serine 140 each carry the phosphoserine modification. Residues 109-139 are a coiled coil; the sequence is ECEDEECEEDASEVEADNQENLETDLDEEQL. Residues 111–144 show a composition bias toward acidic residues; the sequence is EDEECEEDASEVEADNQENLETDLDEEQLSDEGG. 3 disordered regions span residues 111–202, 215–256, and 268–365; these read EDEE…SVVD, LEKV…GRQK, and YKDF…EKRQ. The span at 145-163 shows a compositional bias: basic and acidic residues; the sequence is DVPKGRDRAKSSRKSDPRK. Residues serine 164, serine 168, and serine 172 each carry the phosphoserine modification. Residues 215 to 227 show a composition bias toward basic and acidic residues; sequence LEKVEKEEEKRPD. Acidic residues-rich tracts occupy residues 228-248 and 273-322; these read GEEE…DESE and DPVE…EDEN. Residues serine 244, serine 247, serine 277, and serine 346 each carry the phosphoserine modification. Positions 349 to 383 form a coiled coil; sequence AVKQESDEVKSSFEKRQEKMNEKIASLEKELLDKK. Lysine 351 participates in a covalent cross-link: Glycyl lysine isopeptide (Lys-Gly) (interchain with G-Cter in SUMO2). Positions 352-365 are enriched in basic and acidic residues; that stretch reads QESDEVKSSFEKRQ. Glycyl lysine isopeptide (Lys-Gly) (interchain with G-Cter in SUMO2) cross-links involve residues lysine 383 and lysine 395. A coiled-coil region spans residues 471–491; the sequence is AEIYEQEYLKLNQQKTEEEDN. Residue lysine 556 forms a Glycyl lysine isopeptide (Lys-Gly) (interchain with G-Cter in SUMO2) linkage. The segment covering 560 to 576 has biased composition (basic and acidic residues); sequence KAGDLKTAAEKTATDKK. Positions 560–644 are disordered; it reads KAGDLKTAAE…RKDKPLKSSQ (85 aa). A coiled-coil region spans residues 575–604; the sequence is KKRERRKKKYQKRLKIKEKEKRKKLLEKNN. The segment covering 577–599 has biased composition (basic residues); that stretch reads RERRKKKYQKRLKIKEKEKRKKL. Lysine 609 bears the N6-acetyllysine mark. The span at 630 to 640 shows a compositional bias: basic and acidic residues; sequence LLKDERKDKPL. Glycyl lysine isopeptide (Lys-Gly) (interchain with G-Cter in SUMO2) cross-links involve residues lysine 632 and lysine 649. Residues 657-681 are disordered; sequence QINDAKQPEKIKKKKQDISVHKLKL. Residues 662 to 681 show a composition bias toward basic and acidic residues; that stretch reads KQPEKIKKKKQDISVHKLKL.

This sequence belongs to the MPP10 family. Part of the small subunit (SSU) processome, composed of more than 70 proteins and the RNA chaperone small nucleolar RNA (snoRNA) U3. Component of a heterotrimeric complex containing IMP3, IMP4 and MPHOSPH10. Interacts with IMP3 and IMP4. Phosphorylated in M (mitotic) phase.

Its subcellular location is the nucleus. It localises to the nucleolus. The protein localises to the chromosome. Component of the 60-80S U3 small nucleolar ribonucleoprotein (U3 snoRNP). Required for the early cleavages during pre-18S ribosomal RNA processing. Part of the small subunit (SSU) processome, first precursor of the small eukaryotic ribosomal subunit. During the assembly of the SSU processome in the nucleolus, many ribosome biogenesis factors, an RNA chaperone and ribosomal proteins associate with the nascent pre-rRNA and work in concert to generate RNA folding, modifications, rearrangements and cleavage as well as targeted degradation of pre-ribosomal RNA by the RNA exosome. In Mus musculus (Mouse), this protein is U3 small nucleolar ribonucleoprotein protein MPP10 (Mphosph10).